We begin with the raw amino-acid sequence, 505 residues long: Lysine--tRNA ligase (505 aa).

2 residues coordinate Mg(2+): E415 and E422.

Belongs to the class-II aminoacyl-tRNA synthetase family. In terms of assembly, homodimer. Mg(2+) is required as a cofactor.

It is found in the cytoplasm. It carries out the reaction tRNA(Lys) + L-lysine + ATP = L-lysyl-tRNA(Lys) + AMP + diphosphate. The chain is Lysine--tRNA ligase (lysS) from Escherichia coli (strain K12).